Reading from the N-terminus, the 356-residue chain is uncharacterized protein (356 aa).

Belongs to the NAD(P)-dependent epimerase/dehydratase family. NAD(+) is required as a cofactor. It depends on NADP(+) as a cofactor.

Putative nucleotide sugar epimerase/dehydrogenase. This is an uncharacterized protein from Sinorhizobium fredii (strain NBRC 101917 / NGR234).